The primary structure comprises 355 residues: Neutral protease 2 homolog AFUB_100460 (355 aa).

The signal sequence occupies residues 1-19 (MKITALASAILAVAQGALA). Residues 20 to 172 (LPARAPALDI…PASIKPLDRR (153 aa)) constitute a propeptide that is removed on maturation. Cystine bridges form between Cys179–Cys251 and Cys258–Cys276. His300 contacts Zn(2+). Glu301 is a catalytic residue. Residues His304 and Asp315 each contribute to the Zn(2+) site.

The protein belongs to the peptidase M35 family. It depends on Zn(2+) as a cofactor.

The protein localises to the secreted. It catalyses the reaction Preferential cleavage of bonds with hydrophobic residues in P1'. Also 3-Asn-|-Gln-4 and 8-Gly-|-Ser-9 bonds in insulin B chain.. Secreted metalloproteinase that allows assimilation of proteinaceous substrates. Shows high activities on basic nuclear substrates such as histone and protamine. May be involved in virulence. The polypeptide is Neutral protease 2 homolog AFUB_100460 (Aspergillus fumigatus (strain CBS 144.89 / FGSC A1163 / CEA10) (Neosartorya fumigata)).